The chain runs to 127 residues: Large ribosomal subunit protein bL12 (127 aa).

The segment at 98-127 (PKPVKNGVSKEEAEEAKKQLVESGAEVEIK) is disordered. Positions 105–117 (VSKEEAEEAKKQL) are enriched in basic and acidic residues.

The protein belongs to the bacterial ribosomal protein bL12 family. In terms of assembly, homodimer. Part of the ribosomal stalk of the 50S ribosomal subunit. Forms a multimeric L10(L12)X complex, where L10 forms an elongated spine to which 2 to 4 L12 dimers bind in a sequential fashion. Binds GTP-bound translation factors.

Functionally, forms part of the ribosomal stalk which helps the ribosome interact with GTP-bound translation factors. Is thus essential for accurate translation. This Geobacter sulfurreducens (strain ATCC 51573 / DSM 12127 / PCA) protein is Large ribosomal subunit protein bL12.